The sequence spans 429 residues: MRSYERSKTAYEEAVKLMPGGVNSPVRAFKSVGMTPIFMARGQGAKIYDIDGNEYIDYVLSWGPLILGHANPQVVEALKRVAEQGTSFGAPTLLENELAKLVIERVPSVEIVRMVNSGTEATMSALRLARGYTKRNKIMKFEGSYHGHGDSLLIKAGSGVATLGLPDSPGVPESVAQHTITVPYNDLDSVRYAFERFGEDIAAVIVEPVAGNMGVVPPVPGFLEGLREVTKQYGALLIFDEVMTGFRVDYHCAQGYYGIEPDLTCLGKVIGGGLPVGAYGGKAEIMELVAPSGPVYQAGTLSGNPLAMTAGYETLRQLTPETYEELGRKAARLADGLHQAAEKYDIPHTINRAGSMIGFFFTNEPVVNYETAKTSDLELFAAYYREMANEGIFLPPSQFEGLFLSTAHSDDDIEYTIAAAERVFARLRG.

Lysine 268 carries the N6-(pyridoxal phosphate)lysine modification.

Belongs to the class-III pyridoxal-phosphate-dependent aminotransferase family. HemL subfamily. As to quaternary structure, homodimer. Pyridoxal 5'-phosphate serves as cofactor.

Its subcellular location is the cytoplasm. The catalysed reaction is (S)-4-amino-5-oxopentanoate = 5-aminolevulinate. It participates in porphyrin-containing compound metabolism; protoporphyrin-IX biosynthesis; 5-aminolevulinate from L-glutamyl-tRNA(Glu): step 2/2. In Geobacillus kaustophilus (strain HTA426), this protein is Glutamate-1-semialdehyde 2,1-aminomutase 2.